The sequence spans 472 residues: Methylenetetrahydrofolate--tRNA-(uracil-5-)-methyltransferase TrmFO (472 aa).

10–15 (GGGLAG) lines the FAD pocket.

This sequence belongs to the MnmG family. TrmFO subfamily. Requires FAD as cofactor.

The protein resides in the cytoplasm. It catalyses the reaction uridine(54) in tRNA + (6R)-5,10-methylene-5,6,7,8-tetrahydrofolate + NADH + H(+) = 5-methyluridine(54) in tRNA + (6S)-5,6,7,8-tetrahydrofolate + NAD(+). It carries out the reaction uridine(54) in tRNA + (6R)-5,10-methylene-5,6,7,8-tetrahydrofolate + NADPH + H(+) = 5-methyluridine(54) in tRNA + (6S)-5,6,7,8-tetrahydrofolate + NADP(+). Its function is as follows. Catalyzes the folate-dependent formation of 5-methyl-uridine at position 54 (M-5-U54) in all tRNAs. The polypeptide is Methylenetetrahydrofolate--tRNA-(uracil-5-)-methyltransferase TrmFO (Mesorhizobium japonicum (strain LMG 29417 / CECT 9101 / MAFF 303099) (Mesorhizobium loti (strain MAFF 303099))).